We begin with the raw amino-acid sequence, 324 residues long: Acetyl-coenzyme A carboxylase carboxyl transferase subunit alpha (324 aa).

The CoA carboxyltransferase C-terminal domain maps to 37–291; sequence ILEEKLENLE…DLMIQKTFQQ (255 aa).

It belongs to the AccA family. In terms of assembly, acetyl-CoA carboxylase is a heterohexamer composed of biotin carboxyl carrier protein (AccB), biotin carboxylase (AccC) and two subunits each of ACCase subunit alpha (AccA) and ACCase subunit beta (AccD).

The protein localises to the cytoplasm. It carries out the reaction N(6)-carboxybiotinyl-L-lysyl-[protein] + acetyl-CoA = N(6)-biotinyl-L-lysyl-[protein] + malonyl-CoA. Its pathway is lipid metabolism; malonyl-CoA biosynthesis; malonyl-CoA from acetyl-CoA: step 1/1. Component of the acetyl coenzyme A carboxylase (ACC) complex. First, biotin carboxylase catalyzes the carboxylation of biotin on its carrier protein (BCCP) and then the CO(2) group is transferred by the carboxyltransferase to acetyl-CoA to form malonyl-CoA. In Bacillus cereus (strain ATCC 14579 / DSM 31 / CCUG 7414 / JCM 2152 / NBRC 15305 / NCIMB 9373 / NCTC 2599 / NRRL B-3711), this protein is Acetyl-coenzyme A carboxylase carboxyl transferase subunit alpha.